The sequence spans 308 residues: Porphobilinogen deaminase (308 aa).

At Cys241 the chain carries S-(dipyrrolylmethanemethyl)cysteine.

This sequence belongs to the HMBS family. Monomer. Dipyrromethane is required as a cofactor.

It catalyses the reaction 4 porphobilinogen + H2O = hydroxymethylbilane + 4 NH4(+). Its pathway is porphyrin-containing compound metabolism; protoporphyrin-IX biosynthesis; coproporphyrinogen-III from 5-aminolevulinate: step 2/4. In terms of biological role, tetrapolymerization of the monopyrrole PBG into the hydroxymethylbilane pre-uroporphyrinogen in several discrete steps. In Staphylococcus saprophyticus subsp. saprophyticus (strain ATCC 15305 / DSM 20229 / NCIMB 8711 / NCTC 7292 / S-41), this protein is Porphobilinogen deaminase.